The primary structure comprises 234 residues: Leucyl/phenylalanyl-tRNA--protein transferase (234 aa).

It belongs to the L/F-transferase family.

The protein localises to the cytoplasm. It catalyses the reaction N-terminal L-lysyl-[protein] + L-leucyl-tRNA(Leu) = N-terminal L-leucyl-L-lysyl-[protein] + tRNA(Leu) + H(+). The catalysed reaction is N-terminal L-arginyl-[protein] + L-leucyl-tRNA(Leu) = N-terminal L-leucyl-L-arginyl-[protein] + tRNA(Leu) + H(+). The enzyme catalyses L-phenylalanyl-tRNA(Phe) + an N-terminal L-alpha-aminoacyl-[protein] = an N-terminal L-phenylalanyl-L-alpha-aminoacyl-[protein] + tRNA(Phe). Functions in the N-end rule pathway of protein degradation where it conjugates Leu, Phe and, less efficiently, Met from aminoacyl-tRNAs to the N-termini of proteins containing an N-terminal arginine or lysine. This is Leucyl/phenylalanyl-tRNA--protein transferase from Enterobacter sp. (strain 638).